The primary structure comprises 115 residues: Iron-sulfur cluster insertion protein ErpA (115 aa).

The iron-sulfur cluster site is built by cysteine 43, cysteine 107, and cysteine 109.

The protein belongs to the HesB/IscA family. In terms of assembly, homodimer. The cofactor is iron-sulfur cluster.

Functionally, required for insertion of 4Fe-4S clusters for at least IspG. This chain is Iron-sulfur cluster insertion protein ErpA, found in Photorhabdus laumondii subsp. laumondii (strain DSM 15139 / CIP 105565 / TT01) (Photorhabdus luminescens subsp. laumondii).